Here is a 338-residue protein sequence, read N- to C-terminus: MVQITKGKFDGLQRLSNEKGVIAALAIDQRGSLKKMIQQAKGTENKKDVEDFKQLVSEELTPYASAILLDLEYGTPAIKARHEGSGLLTSYEKTGYDATTPGKLPDLIEDLSALRIKENGGDAVKILVYYDPDEPAEINEIKYAFLERIGAECRAVDIPFFLEPITYDATVTDSGSLEYAKLKPAKVKASIKEFSKPRYGVDVLKLEVPVNFKYVEGFAEGEVAYTQDEAARHFEECSDLSPLPFIYLSAGVTSEMFHKTIQFANQHNVQYSGVLCGRATWADGIEVYGKQGDDALREWLRTQGKENITSLDKLLDEGAVPWWTKYGSFEDVHVVEKQ.

Belongs to the aldolase LacD family.

It carries out the reaction D-tagatofuranose 1,6-bisphosphate = D-glyceraldehyde 3-phosphate + dihydroxyacetone phosphate. Its pathway is carbohydrate metabolism; D-tagatose 6-phosphate degradation; D-glyceraldehyde 3-phosphate and glycerone phosphate from D-tagatose 6-phosphate: step 2/2. The sequence is that of Tagatose 1,6-diphosphate aldolase from Listeria monocytogenes serotype 4b (strain CLIP80459).